The following is a 121-amino-acid chain: Amelogenin (121 aa).

The disordered stretch occupies residues leucine 1–serine 121. Composition is skewed to polar residues over residues serine 10–leucine 19 and histidine 47–leucine 59. The span at proline 60–alanine 84 shows a compositional bias: low complexity. Pro residues predominate over residues proline 85 to serine 121.

The protein belongs to the amelogenin family.

It localises to the secreted. It is found in the extracellular space. The protein resides in the extracellular matrix. Its function is as follows. Plays a role in the biomineralization of teeth. Seems to regulate the formation of crystallites during the secretory stage of tooth enamel development. Thought to play a major role in the structural organization and mineralization of developing enamel. The protein is Amelogenin (AMEL) of Tachyglossus aculeatus aculeatus (Southeast Australian short-beaked echidna).